Reading from the N-terminus, the 485-residue chain is UDP-N-acetylmuramate--L-alanine ligase (485 aa).

129–135 (GTHGKTT) is an ATP binding site.

This sequence belongs to the MurCDEF family.

The protein resides in the cytoplasm. The enzyme catalyses UDP-N-acetyl-alpha-D-muramate + L-alanine + ATP = UDP-N-acetyl-alpha-D-muramoyl-L-alanine + ADP + phosphate + H(+). It participates in cell wall biogenesis; peptidoglycan biosynthesis. Its function is as follows. Cell wall formation. This Vibrio parahaemolyticus serotype O3:K6 (strain RIMD 2210633) protein is UDP-N-acetylmuramate--L-alanine ligase.